The sequence spans 761 residues: Phosphoribosylformylglycinamidine synthase subunit PurL (761 aa).

The active site involves His-49. Residues Tyr-52 and Lys-92 each coordinate ATP. Mg(2+) is bound at residue Glu-94. Residues 95 to 98 (SHNH) and Arg-117 each bind substrate. Residue His-96 is the Proton acceptor of the active site. Asp-118 lines the Mg(2+) pocket. Substrate is bound at residue Gln-241. Asp-269 lines the Mg(2+) pocket. Substrate is bound at residue 318–320 (ESQ). Residues Asn-502 and Gly-539 each coordinate ATP. Position 540 (Asn-540) interacts with Mg(2+). Ser-542 contacts substrate.

Belongs to the FGAMS family. In terms of assembly, monomer. Part of the FGAM synthase complex composed of 1 PurL, 1 PurQ and 2 PurS subunits.

The protein resides in the cytoplasm. The enzyme catalyses N(2)-formyl-N(1)-(5-phospho-beta-D-ribosyl)glycinamide + L-glutamine + ATP + H2O = 2-formamido-N(1)-(5-O-phospho-beta-D-ribosyl)acetamidine + L-glutamate + ADP + phosphate + H(+). The protein operates within purine metabolism; IMP biosynthesis via de novo pathway; 5-amino-1-(5-phospho-D-ribosyl)imidazole from N(2)-formyl-N(1)-(5-phospho-D-ribosyl)glycinamide: step 1/2. In terms of biological role, part of the phosphoribosylformylglycinamidine synthase complex involved in the purines biosynthetic pathway. Catalyzes the ATP-dependent conversion of formylglycinamide ribonucleotide (FGAR) and glutamine to yield formylglycinamidine ribonucleotide (FGAM) and glutamate. The FGAM synthase complex is composed of three subunits. PurQ produces an ammonia molecule by converting glutamine to glutamate. PurL transfers the ammonia molecule to FGAR to form FGAM in an ATP-dependent manner. PurS interacts with PurQ and PurL and is thought to assist in the transfer of the ammonia molecule from PurQ to PurL. This chain is Phosphoribosylformylglycinamidine synthase subunit PurL, found in Chlorobium luteolum (strain DSM 273 / BCRC 81028 / 2530) (Pelodictyon luteolum).